Here is a 529-residue protein sequence, read N- to C-terminus: DEP domain-containing protein 1B (529 aa).

The DEP domain maps to 24-108 (FRARMPLRRH…DNRHLYRFPP (85 aa)). Phosphoserine is present on Ser160. Residues 201-393 (DSLEEVLNTK…FLMDNYQEIL (193 aa)) enclose the Rho-GAP domain. At Ser436 the chain carries Phosphoserine.

The protein is DEP domain-containing protein 1B (Depdc1b) of Mus musculus (Mouse).